A 96-amino-acid chain; its full sequence is UPF0235 protein ESA_00387 (96 aa).

It belongs to the UPF0235 family.

The sequence is that of UPF0235 protein ESA_00387 from Cronobacter sakazakii (strain ATCC BAA-894) (Enterobacter sakazakii).